The chain runs to 130 residues: Arginine decarboxylase proenzyme (130 aa).

The active-site Schiff-base intermediate with substrate; via pyruvic acid is the Ser78. Residue Ser78 is modified to Pyruvic acid (Ser); by autocatalysis. The active-site Proton acceptor; for processing activity is His83. The Proton donor; for catalytic activity role is filled by Cys98.

This sequence belongs to the prokaryotic AdoMetDC family. Type 1 subfamily. In terms of assembly, heterooctamer of four alpha and four beta chains arranged as a tetramer of alpha/beta heterodimers. It depends on pyruvate as a cofactor. Post-translationally, is synthesized initially as an inactive proenzyme. Formation of the active enzyme involves a self-maturation process in which the active site pyruvoyl group is generated from an internal serine residue via an autocatalytic post-translational modification. Two non-identical subunits are generated from the proenzyme in this reaction, and the pyruvate is formed at the N-terminus of the alpha chain, which is derived from the carboxyl end of the proenzyme. The post-translation cleavage follows an unusual pathway, termed non-hydrolytic serinolysis, in which the side chain hydroxyl group of the serine supplies its oxygen atom to form the C-terminus of the beta chain, while the remainder of the serine residue undergoes an oxidative deamination to produce ammonia and the pyruvoyl group blocking the N-terminus of the alpha chain.

The enzyme catalyses L-arginine + H(+) = agmatine + CO2. It participates in amine and polyamine biosynthesis; agmatine biosynthesis; agmatine from L-arginine: step 1/1. In terms of biological role, specifically catalyzes the decarboxylation of L-arginine to agmatine. Has no S-adenosylmethionine decarboxylase (AdoMetDC) activity. The protein is Arginine decarboxylase proenzyme of Sulfolobus acidocaldarius (strain ATCC 33909 / DSM 639 / JCM 8929 / NBRC 15157 / NCIMB 11770).